We begin with the raw amino-acid sequence, 149 residues long: Large ribosomal subunit protein bL20m (149 aa).

Residues 1–9 (MVFLTAQLW) constitute a mitochondrion transit peptide.

The protein belongs to the bacterial ribosomal protein bL20 family. Component of the mitochondrial large ribosomal subunit (mt-LSU). Mature mammalian 55S mitochondrial ribosomes consist of a small (28S) and a large (39S) subunit. The 28S small subunit contains a 12S ribosomal RNA (12S mt-rRNA) and 30 different proteins. The 39S large subunit contains a 16S rRNA (16S mt-rRNA), a copy of mitochondrial valine transfer RNA (mt-tRNA(Val)), which plays an integral structural role, and 52 different proteins. Interacts with OXA1L.

It localises to the mitochondrion. The sequence is that of Large ribosomal subunit protein bL20m (MRPL20) from Homo sapiens (Human).